Reading from the N-terminus, the 333-residue chain is MTARASQDSAALPLDKETLLTVYRKMRTIRDFEERLHVDFGRGDIPGFVHLYAGEEAAGVGILHHLNDGDRIASTHRGHGHCIAKGVDPVAMMKEIYGKKGGSCNGKGGSMHIADLSKGMMGANGILGAGAPLICGAALAAKFRGKGEVGITFCGDGASNQGTFLESLNLAAVWNLPVIFVIENNGYAESTSRDYGTAVDSYVDRAAGFGIPGVTVDGTDFFAVHEAAGEVIRRAREGGGPSLLECKMVRFYGHFEGDAQTYRAAGELDDIRANKDCLKLFGRAVTQAGVVAREELDTIDREVAALIEHAVQEAKAAPQPGPEDLLTDVYVSY.

As to quaternary structure, tetramer of 2 alpha and 2 beta subunits. Requires thiamine diphosphate as cofactor.

It participates in ketone degradation; acetoin degradation. Catalyzes the 2,6-dichlorophenolindophenol-dependent cleavage of acetoin into acetate and acetaldehyde, in vitro. The alpha subunit is probably the catalytic subunit of the enzyme. In Cupriavidus necator (strain ATCC 17699 / DSM 428 / KCTC 22496 / NCIMB 10442 / H16 / Stanier 337) (Ralstonia eutropha), this protein is Acetoin:2,6-dichlorophenolindophenol oxidoreductase subunit alpha (acoA).